Consider the following 828-residue polypeptide: Putative alpha-1,3-mannosyltransferase MNN12 (828 aa).

At 1-13 (MIEKLTIKRSRQK) the chain is on the cytoplasmic side. A helical transmembrane segment spans residues 14 to 34 (VIAYSVIIIWLMIVNIWLLNN). At 35-828 (YHLNSSTLTR…YYGDVWVGME (794 aa)) the chain is on the lumenal side. Asparagine 38 carries an N-linked (GlcNAc...) asparagine glycan. Positions 80–104 (HQEEDVPNSQSTDNSLIKPTSPAKN) are disordered. Residues 86–103 (PNSQSTDNSLIKPTSPAK) show a composition bias toward polar residues. N-linked (GlcNAc...) asparagine glycans are attached at residues asparagine 247, asparagine 437, and asparagine 591.

This sequence belongs to the MNN1/MNT family.

It is found in the golgi apparatus membrane. The protein operates within protein modification; protein glycosylation. Its function is as follows. Responsible for addition of the terminal mannose residues to the outer chain of core N-linked polysaccharides and to O-linked mannotriose. Implicated in late Golgi modifications. This Candida albicans (strain SC5314 / ATCC MYA-2876) (Yeast) protein is Putative alpha-1,3-mannosyltransferase MNN12 (MNN12).